A 186-amino-acid polypeptide reads, in one-letter code: Elongation factor P (186 aa).

The protein belongs to the elongation factor P family.

The protein resides in the cytoplasm. The protein operates within protein biosynthesis; polypeptide chain elongation. In terms of biological role, involved in peptide bond synthesis. Stimulates efficient translation and peptide-bond synthesis on native or reconstituted 70S ribosomes in vitro. Probably functions indirectly by altering the affinity of the ribosome for aminoacyl-tRNA, thus increasing their reactivity as acceptors for peptidyl transferase. This chain is Elongation factor P, found in Elusimicrobium minutum (strain Pei191).